A 337-amino-acid polypeptide reads, in one-letter code: Tert-butanol monooxygenase / tert-amyl alcohol desaturase reductase subunit (337 aa).

One can recognise an FAD-binding FR-type domain in the interval 9–114 (KYPKTALNLR…GHPRNNFPLI (106 aa)). The region spanning 254-337 (FQIKIASTGT…SKGATLVLDL (84 aa)) is the 2Fe-2S ferredoxin-type domain. [2Fe-2S] cluster-binding residues include C288, C293, C296, and C324.

Belongs to the PDR/VanB family. This two-component enzyme is composed of an oxygenase (MdpJ) and a reductase (MdpK). [2Fe-2S] cluster serves as cofactor.

Functionally, reductase component of a two-component system involved in the degradation of tertiary alcohols such as tert-butyl alcohol (TBA) and tert-amyl alcohol (TAA). MdpK probably provides electrons via its [2Fe-2S] iron-sulfur cluster to the MdpJ oxygenase subunit. In Aquincola tertiaricarbonis, this protein is Tert-butanol monooxygenase / tert-amyl alcohol desaturase reductase subunit.